The sequence spans 341 residues: MKSLVKAKAEKGIWLQDTPKPEVGHNDLLIKIRKTAICGTDMHIYNWDEWSQNTIPVPVVVGHEYVGEVVGMGQEVKGFEVGDRVSGEGHITCGHCRNCRAGRVHLCRNTEGVGVNRPGAFAEYLVIPAFNAFKIPDNISDDLASIFDPFGNAVHTALSFDLVGEDVLITGAGPIGIMAAAVAKHVGARHVVVTDINPYRLELAKKMGATRTVDVSKENLQDVMDELGMSEGFDVGLEMSGVPVAFRDMLNKMNHGGKIAMLGIPPQDVAVDWNQVIFKGLVIKGIYGREMFETWYKMASLLQSGLDLSPIITHTFSIDDFQKGFDTMGSGHSGKVILDWQ.

C38 lines the Zn(2+) pocket. Residues T40 and H43 each act as charge relay system in the active site. Zn(2+) is bound by residues H63, E64, C93, C96, C99, and C107. Residues I175, D195, R200, 262-264, and 286-287 each bind NAD(+); these read LGI and IY.

The protein belongs to the zinc-containing alcohol dehydrogenase family. Homotetramer. Zn(2+) serves as cofactor.

Its subcellular location is the cytoplasm. The enzyme catalyses L-threonine + NAD(+) = (2S)-2-amino-3-oxobutanoate + NADH + H(+). It participates in amino-acid degradation; L-threonine degradation via oxydo-reductase pathway; glycine from L-threonine: step 1/2. Its function is as follows. Catalyzes the NAD(+)-dependent oxidation of L-threonine to 2-amino-3-ketobutyrate. In Alteromonas mediterranea (strain DSM 17117 / CIP 110805 / LMG 28347 / Deep ecotype), this protein is L-threonine 3-dehydrogenase.